The primary structure comprises 257 residues: Acetylglutamate kinase (257 aa).

Substrate contacts are provided by residues 43-44 (GG), Arg-65, and Asn-157. Residues 180–185 (DVSGIL) and 208–210 (IIT) contribute to the ATP site.

The protein belongs to the acetylglutamate kinase family. ArgB subfamily. Homodimer.

Its subcellular location is the cytoplasm. It catalyses the reaction N-acetyl-L-glutamate + ATP = N-acetyl-L-glutamyl 5-phosphate + ADP. Its pathway is amino-acid biosynthesis; L-arginine biosynthesis; N(2)-acetyl-L-ornithine from L-glutamate: step 2/4. Its function is as follows. Catalyzes the ATP-dependent phosphorylation of N-acetyl-L-glutamate. The chain is Acetylglutamate kinase from Serratia proteamaculans (strain 568).